The chain runs to 300 residues: Phospholipase A1 (300 aa).

An intrachain disulfide couples Cys4 to Cys87. Ser137 (nucleophile) is an active-site residue. Asp165 acts as the Charge relay system in catalysis. 2 disulfide bridges follow: Cys176-Cys181 and Cys219-Cys227. His229 serves as the catalytic Charge relay system. Disulfide bonds link Cys244–Cys268, Cys245–Cys293, and Cys261–Cys266.

The protein belongs to the AB hydrolase superfamily. Lipase family. As to expression, expressed by the venom gland.

It localises to the secreted. It carries out the reaction a 1,2-diacyl-sn-glycero-3-phosphocholine + H2O = a 2-acyl-sn-glycero-3-phosphocholine + a fatty acid + H(+). In terms of biological role, catalyzes the hydrolysis of phosphatidylcholine with phospholipase A1 activity. May act as an allergen and induce hemolytic activity. This is Phospholipase A1 from Vespula maculifrons (Eastern yellow jacket).